Consider the following 418-residue polypeptide: Nucleoside permease NupC (418 aa).

The next 9 helical transmembrane spans lie at 2–22 (IFSSLFSVVGMAVLFLIAWVF), 34–54 (IVSAFVIQVALGALALYVPLG), 93–113 (IGGFVFAINVLAIIIFFASLI), 174–194 (IFAVMCVGMASVAGPVLAGYA), 198–218 (IPLPYLIAASFMSAPGGLLFA), 264–284 (LLAFVGMLALINGLLGVVGGF), 292–314 (LGLILGTLLKPLAFMLGIPWSQA), 354–374 (AIITFALCGFANLSSVAMLIG), and 395–415 (VLVGTLSNFMSATIAGLFIGL).

It belongs to the concentrative nucleoside transporter (CNT) (TC 2.A.41) family.

The protein localises to the cell inner membrane. Its function is as follows. Involved in purine nucleosides uptake. Could also be involved in uptake of nucleobases. The polypeptide is Nucleoside permease NupC (Helicobacter pylori (strain ATCC 700392 / 26695) (Campylobacter pylori)).